We begin with the raw amino-acid sequence, 229 residues long: 2-C-methyl-D-erythritol 4-phosphate cytidylyltransferase (229 aa).

Belongs to the IspD/TarI cytidylyltransferase family. IspD subfamily.

It catalyses the reaction 2-C-methyl-D-erythritol 4-phosphate + CTP + H(+) = 4-CDP-2-C-methyl-D-erythritol + diphosphate. Its pathway is isoprenoid biosynthesis; isopentenyl diphosphate biosynthesis via DXP pathway; isopentenyl diphosphate from 1-deoxy-D-xylulose 5-phosphate: step 2/6. Catalyzes the formation of 4-diphosphocytidyl-2-C-methyl-D-erythritol from CTP and 2-C-methyl-D-erythritol 4-phosphate (MEP). The protein is 2-C-methyl-D-erythritol 4-phosphate cytidylyltransferase of Clostridium acetobutylicum (strain ATCC 824 / DSM 792 / JCM 1419 / IAM 19013 / LMG 5710 / NBRC 13948 / NRRL B-527 / VKM B-1787 / 2291 / W).